Reading from the N-terminus, the 284-residue chain is 2,3,4,5-tetrahydropyridine-2,6-dicarboxylate N-succinyltransferase (284 aa).

Substrate contacts are provided by arginine 111 and aspartate 148.

It belongs to the transferase hexapeptide repeat family. As to quaternary structure, homotrimer.

The protein resides in the cytoplasm. It catalyses the reaction (S)-2,3,4,5-tetrahydrodipicolinate + succinyl-CoA + H2O = (S)-2-succinylamino-6-oxoheptanedioate + CoA. It functions in the pathway amino-acid biosynthesis; L-lysine biosynthesis via DAP pathway; LL-2,6-diaminopimelate from (S)-tetrahydrodipicolinate (succinylase route): step 1/3. This is 2,3,4,5-tetrahydropyridine-2,6-dicarboxylate N-succinyltransferase from Brucella anthropi (strain ATCC 49188 / DSM 6882 / CCUG 24695 / JCM 21032 / LMG 3331 / NBRC 15819 / NCTC 12168 / Alc 37) (Ochrobactrum anthropi).